The primary structure comprises 95 residues: Co-chaperonin GroES (95 aa).

This sequence belongs to the GroES chaperonin family. As to quaternary structure, heptamer of 7 subunits arranged in a ring. Interacts with the chaperonin GroEL.

The protein resides in the cytoplasm. Together with the chaperonin GroEL, plays an essential role in assisting protein folding. The GroEL-GroES system forms a nano-cage that allows encapsulation of the non-native substrate proteins and provides a physical environment optimized to promote and accelerate protein folding. GroES binds to the apical surface of the GroEL ring, thereby capping the opening of the GroEL channel. The sequence is that of Co-chaperonin GroES from Chlorobaculum tepidum (strain ATCC 49652 / DSM 12025 / NBRC 103806 / TLS) (Chlorobium tepidum).